A 309-amino-acid polypeptide reads, in one-letter code: Anamorsin (309 aa).

Residues 6 to 172 (ISPGQLVAVF…KPNFEVGSSS (167 aa)) are N-terminal SAM-like domain. Residues 173-222 (QLKLPNKKSSSVKPVVDPAAAKLWTLSANDMEDDSVDLIDSDELLDPEDL) form a linker region. Phosphoserine is present on residues Ser182, Ser183, and Ser213. Residues Cys235, Cys244, Cys247, and Cys249 each coordinate [2Fe-2S] cluster. A fe-S binding site A region spans residues 235–249 (CGEGKKRKACKNCTC). A Phosphoserine modification is found at Ser269. [4Fe-4S] cluster-binding residues include Cys271, Cys274, Cys282, and Cys285. Short sequence motifs (cx2C motif) lie at residues 271 to 274 (CGNC) and 282 to 285 (CANC). The fe-S binding site B stretch occupies residues 271 to 285 (CGNCYLGDAFRCANC). Residues Ser302 and Ser304 each carry the phosphoserine modification.

This sequence belongs to the anamorsin family. Monomer. Interacts with NDOR1. Interacts with CHCHD4. [2Fe-2S] cluster serves as cofactor. Requires [4Fe-4S] cluster as cofactor.

The protein localises to the cytoplasm. It localises to the nucleus. It is found in the mitochondrion intermembrane space. Functionally, component of the cytosolic iron-sulfur (Fe-S) protein assembly (CIA) machinery required for the maturation of extramitochondrial Fe-S proteins. Part of an electron transfer chain functioning in an early step of cytosolic Fe-S biogenesis, facilitating the de novo assembly of a [4Fe-4S] cluster on the scaffold complex NUBP1-NUBP2. Electrons are transferred to CIAPIN1 from NADPH via the FAD- and FMN-containing protein NDOR1. NDOR1-CIAPIN1 are also required for the assembly of the diferric tyrosyl radical cofactor of ribonucleotide reductase (RNR), probably by providing electrons for reduction during radical cofactor maturation in the catalytic small subunit. Has anti-apoptotic effects in the cell. Involved in negative control of cell death upon cytokine withdrawal. Promotes development of hematopoietic cells. In Mus musculus (Mouse), this protein is Anamorsin.